Here is a 188-residue protein sequence, read N- to C-terminus: Adenine phosphoribosyltransferase (188 aa).

An AMP-binding site is contributed by 134 to 138 (ATGGS).

Belongs to the purine/pyrimidine phosphoribosyltransferase family. Homodimer. Requires Mg(2+) as cofactor.

It localises to the cytoplasm. The protein localises to the nucleus. It catalyses the reaction AMP + diphosphate = 5-phospho-alpha-D-ribose 1-diphosphate + adenine. It functions in the pathway purine metabolism; AMP biosynthesis via salvage pathway; AMP from adenine: step 1/1. Functionally, catalyzes a salvage reaction resulting in the formation of AMP, that is energically less costly than de novo synthesis. In Candida albicans (strain SC5314 / ATCC MYA-2876) (Yeast), this protein is Adenine phosphoribosyltransferase (APT1).